A 331-amino-acid polypeptide reads, in one-letter code: Laforin (331 aa).

The region spanning 1-124 (MRFRFGVVVP…NNLVDGVYCL (124 aa)) is the CBM20 domain. S25 carries the post-translational modification Phosphoserine; by AMPK. Residues W32, K87, 103-107 (GPHHD), D197, D235, and R241 each bind substrate. Residues 156–323 (HYSRILPNIW…QEDFFQKFGK (168 aa)) form the Tyrosine-protein phosphatase domain. C266 serves as the catalytic Phosphocysteine intermediate. A Glucan phosphatase signature motif CXAGXGR motif is present at residues 266–272 (CNAGVGR). Substrate is bound by residues 267–272 (NAGVGR) and Y304.

The protein belongs to the protein-tyrosine phosphatase family. Homodimer. Interacts with itself. Interacts with PPP1R3B, PPP1R3C, PPP1R3D, HIRIP5, and EPM2AIP1. Binds glycogen and Lafora bodies. Interacts with NHLRC1/malin (via the NHL repeats). Forms a complex with NHLRC1/malin and HSP70. Interacts with PPP1R3D; in the presence of NHLC1/malin the interaction leads to ubiquitination and autophagic degradation of PPP1R3D. Interacts (via the phosphatase domain) with MAPT/Tau; the interaction dephosphorylates MAPT. Isoform 1 and isoform 2 interact to form a heterodimeric complex that lacks phosphatase activity (in vitro). Active phosphatase isoform 7 and isoform 1 interact with each other, but give rise to lower phosphatase activity than isoform 1 or isoform 7 by themselves (in vitro). Active phosphatase isoform 7 and inactive isoform 2 interact with each other, but give rise to lower phosphatase activity than isoform 7 by itself (in vitro). Interacts with PRDM8. Polyubiquitinated by NHLRC1/malin. In terms of processing, phosphorylation on Ser-25 by AMPK affects the phosphatase activity of the enzyme and its ability to homodimerize and interact with NHLRC1, PPP1R3C or PRKAA2. As to expression, expressed in heart, skeletal muscle, kidney, pancreas and brain. Isoform 4 is also expressed in the placenta.

The protein resides in the cytoplasm. It localises to the endoplasmic reticulum membrane. It is found in the cell membrane. Its subcellular location is the nucleus. It carries out the reaction O-phospho-L-tyrosyl-[protein] + H2O = L-tyrosyl-[protein] + phosphate. The enzyme catalyses O-phospho-L-seryl-[protein] + H2O = L-seryl-[protein] + phosphate. The catalysed reaction is O-phospho-L-threonyl-[protein] + H2O = L-threonyl-[protein] + phosphate. Plays an important role in preventing glycogen hyperphosphorylation and the formation of insoluble aggregates, via its activity as glycogen phosphatase, and by promoting the ubiquitination of proteins involved in glycogen metabolism via its interaction with the E3 ubiquitin ligase NHLRC1/malin. Shows strong phosphatase activity towards complex carbohydrates in vitro, avoiding glycogen hyperphosphorylation which is associated with reduced branching and formation of insoluble aggregates. Dephosphorylates phosphotyrosine and synthetic substrates, such as para-nitrophenylphosphate (pNPP), and has low activity with phosphoserine and phosphothreonine substrates (in vitro). Has been shown to dephosphorylate MAPT. Forms a complex with NHLRC1/malin and HSP70, which suppresses the cellular toxicity of misfolded proteins by promoting their degradation through the ubiquitin-proteasome system (UPS). Acts as a scaffold protein to facilitate PPP1R3C/PTG ubiquitination by NHLRC1/malin. Also promotes proteasome-independent protein degradation through the macroautophagy pathway. In terms of biological role, does not bind to glycogen. Lacks phosphatase activity and might function as a dominant-negative regulator for the phosphatase activity of isoform 1 and isoform 7. Functionally, has phosphatase activity (in vitro). The sequence is that of Laforin (EPM2A) from Homo sapiens (Human).